Here is a 738-residue protein sequence, read N- to C-terminus: Coiled-coil domain-containing protein 142 (738 aa).

A disordered region spans residues 1-34; sequence MARASSSSGPLPPLANVPSSWAQPVGAGEERDEG. Residues 69–92 are a coiled coil; that stretch reads ALQRLRATLLRLHREREQLLRARD. The tract at residues 682 to 704 is disordered; sequence LSTLGGGGRGGGGGGGPGPSPEA. Residues 685-698 are compositionally biased toward gly residues; that stretch reads LGGGGRGGGGGGGP.

This is Coiled-coil domain-containing protein 142 (Ccdc142) from Mus musculus (Mouse).